Consider the following 268-residue polypeptide: MGSPRSALSCLLLHLLVLCLQAQVRSAAQKRGPGAGNPADTLGQGHEDRPFGQRSRAGKNFTNPAPNYPEEGSKEQRDSVLPKVTQRHVREQSLVTDQLSRRLIRTYQLYSRTSGKHVQVLANKRINAMAEDGDPFAKLIVETDTFGSRVRVRGAETGLYICMNKKGKLIAKSNGKGKDCVFTEIVLENNYTALQNAKYEGWYMAFTRKGRPRKGSKTRQHQREVHFMKRLPRGHHTTEQSLRFEFLNYPPFTRSLRGSQRTWAPEPR.

The N-terminal stretch at 1-22 is a signal peptide; the sequence is MGSPRSALSCLLLHLLVLCLQA. At Gln23 the chain carries Pyrrolidone carboxylic acid. Residues 29–87 form a disordered region; the sequence is QKRGPGAGNPADTLGQGHEDRPFGQRSRAGKNFTNPAPNYPEEGSKEQRDSVLPKVTQR. Asn60 carries an N-linked (GlcNAc...) asparagine glycan. Positions 71-80 are enriched in basic and acidic residues; the sequence is EGSKEQRDSV. An N-linked (GlcNAc...) asparagine glycan is attached at Asn190.

The protein belongs to the heparin-binding growth factors family. In terms of assembly, monomer. Homodimer. Interacts with FGFR1, FGFR2, FGFR3 and FGFR4. Affinity between fibroblast growth factors (FGFs) and their receptors is increased by heparan sulfate glycosaminoglycans that function as coreceptors. In terms of processing, the N-terminus is blocked. As to expression, absent in normal mammary glands and detected only in adult testis and ovary and in midgestational embryos.

It localises to the secreted. Plays an important role in the regulation of embryonic development, cell proliferation, cell differentiation and cell migration. Required for normal brain, eye, ear and limb development during embryogenesis. Required for normal development of the gonadotropin-releasing hormone (GnRH) neuronal system. Plays a role in neurite outgrowth in hippocampal cells. Cooperates with Wnt-1 in mouse mammary tumor virus-induced murine mammary tumorigenesis. This is Fibroblast growth factor 8 (Fgf8) from Mus musculus (Mouse).